Consider the following 473-residue polypeptide: MAPQLLLCLIQTFLWSLPEAESNVFLKSNVANRFLQRTKRANSGFEEIYPANFERECVEERCSKEEAREVFEDDEKTEAFWTVYVDGDQCLSNPCHYGGTCKDGIGSYTCTCLAGYEGKNCEHDLLKSCRVDNGNCWHFCKPVQNDTQCSCAEGYRLGDNGFSCIAEGEFSCGRNIKSRNKREASLPDFQTDFSDDYDAIDENNLIETVQSQSATLLKKSDNPNPDIRIVNGLDCKLGECPWQAVLIDEKGTAFGGGTILSPYFVLTAAHCINKTKSIAVVVGQVDISRKETRRLLSVDKVYTHPKYVHVTNDYDIAIIQLKTPIQFSENVVPACLPTADFANHVLMKQDFGIVSGFGRIEEKGPTSNILKVVMVPYVDRHTCILSTKIPITRNMFCAGYGNQPEDACEGDSGGPHITAYKDTHFLTGIVSWGEGCGRDGKYGIYTKVSNFLPWIKTIMRRKQPSTESSTGRL.

The signal sequence occupies residues 1–20; the sequence is MAPQLLLCLIQTFLWSLPEA. Positions 21-40 are excised as a propeptide; that stretch reads ESNVFLKSNVANRFLQRTKR. Residues 41 to 86 form the Gla domain; that stretch reads ANSGFEEIYPANFERECVEERCSKEEAREVFEDDEKTEAFWTVYVD. 4-carboxyglutamate is present on residues glutamate 46, glutamate 47, glutamate 54, glutamate 56, glutamate 59, glutamate 60, glutamate 65, glutamate 66, glutamate 69, glutamate 72, and glutamate 75. Cysteines 57 and 62 form a disulfide. The region spanning 86–122 is the EGF-like 1; calcium-binding domain; that stretch reads DGDQCLSNPCHYGGTCKDGIGSYTCTCLAGYEGKNCE. 10 disulfides stabilise this stretch: cysteine 90/cysteine 101, cysteine 95/cysteine 110, cysteine 112/cysteine 121, cysteine 129/cysteine 140, cysteine 136/cysteine 149, cysteine 151/cysteine 164, cysteine 172/cysteine 335, cysteine 235/cysteine 240, cysteine 383/cysteine 397, and cysteine 408/cysteine 436. Serine 92 carries an O-linked (Hex...) serine glycan. Positions 129–164 constitute an EGF-like 2 domain; sequence CRVDNGNCWHFCKPVQNDTQCSCAEGYRLGDNGFSC. A propeptide spans 182–228 (activation peptide); sequence REASLPDFQTDFSDDYDAIDENNLIETVQSQSATLLKKSDNPNPDIR. Residues 229-460 form the Peptidase S1 domain; that stretch reads IVNGLDCKLG…FLPWIKTIMR (232 aa). The active-site Charge relay system is the histidine 270. N-linked (GlcNAc...) asparagine glycosylation is present at asparagine 273. Aspartate 315 acts as the Charge relay system in catalysis. The Charge relay system role is filled by serine 412.

Belongs to the peptidase S1 family. Snake venom subfamily. Heterodimer of a light chain and a heavy chain; disulfide-linked. The vitamin K-dependent, enzymatic carboxylation of some glutamate residues allows the modified protein to bind calcium. Expressed by the venom gland.

The protein localises to the secreted. The catalysed reaction is Selective cleavage of Arg-|-Thr and then Arg-|-Ile bonds in prothrombin to form thrombin.. Snake prothrombin activator that attacks the hemostatic system of prey. This protein is functionally similar to blood coagulation factor Xa. In Demansia vestigiata (Lesser black whip snake), this protein is Venom prothrombin activator vestarin-D1.